A 143-amino-acid chain; its full sequence is D-aminoacyl-tRNA deacylase (143 aa).

The Gly-cisPro motif, important for rejection of L-amino acids motif lies at 135–136 (GP).

Belongs to the DTD family. Homodimer.

It localises to the cytoplasm. It carries out the reaction glycyl-tRNA(Ala) + H2O = tRNA(Ala) + glycine + H(+). It catalyses the reaction a D-aminoacyl-tRNA + H2O = a tRNA + a D-alpha-amino acid + H(+). An aminoacyl-tRNA editing enzyme that deacylates mischarged D-aminoacyl-tRNAs. Also deacylates mischarged glycyl-tRNA(Ala), protecting cells against glycine mischarging by AlaRS. Acts via tRNA-based rather than protein-based catalysis; rejects L-amino acids rather than detecting D-amino acids in the active site. By recycling D-aminoacyl-tRNA to D-amino acids and free tRNA molecules, this enzyme counteracts the toxicity associated with the formation of D-aminoacyl-tRNA entities in vivo and helps enforce protein L-homochirality. The protein is D-aminoacyl-tRNA deacylase of Mycolicibacterium smegmatis (strain ATCC 700084 / mc(2)155) (Mycobacterium smegmatis).